The chain runs to 392 residues: ER-bound oxygenase mpaB (392 aa).

Over 1-21 the chain is Lumenal; sequence MSLPLPPALSELARALPYSRT. Residues 22–41 form a helical membrane-spanning segment; the sequence is QWLPIFVGFLIGYPILIRAL. The Cytoplasmic portion of the chain corresponds to 42 to 392; the sequence is RYKRHGEMKK…WSKYHATTND (351 aa). A disordered region spans residues 352–376; it reads DLGQKKGPQGDPGNDEGIKDLKDGE. Over residues 367-376 the composition is skewed to basic and acidic residues; sequence EGIKDLKDGE.

This sequence belongs to the mpaB oxygenase family.

Its subcellular location is the endoplasmic reticulum membrane. It carries out the reaction 4-farnesyl-3,5-dihydroxy-6-methylphthalide + AH2 + 2 O2 = (4E,8E)-10-(4,6-dihydroxy-7-methyl-3-oxo-1,3-dihydro-2-benzofuran-5-yl)-4,8-dimethyldeca-4,8-dienoate + acetone + A + H2O + H(+). It functions in the pathway secondary metabolite biosynthesis; terpenoid biosynthesis. Functionally, ER-bound oxygenase; part of the gene cluster that mediates the biosynthesis of mycophenolic acid (MPA), the first isolated antibiotic natural product in the world obtained from a culture of Penicillium brevicompactum in 1893. MpaB catalyzes the oxidative cleavage the C19-C20 double bond in farnesyl-DHMP (FDHMP) to yield FDHMP-3C via a mycophenolic aldehyde intermediate. The first step of the pathway is the synthesis of 5-methylorsellinic acid (5MOA) by the cytosolic polyketide synthase mpaC. 5MOA is then converted to the phthalide compound 5,7-dihydroxy-4,6-dimethylphthalide (DHMP) by the endoplasmic reticulum-bound cytochrome P450 monooxygenase mpaDE. MpaDE first catalyzes hydroxylation of 5-MOA to 4,6-dihydroxy-2-(hydroxymethyl)-3-methylbenzoic acid (DHMB). MpaDE then acts as a lactone synthase that catalyzes the ring closure to convert DHMB into DHMP. The next step is the prenylation of DHMP by the Golgi apparatus-associated prenyltransferase mpaA to yield farnesyl-DHMP (FDHMP). The ER-bound oxygenase mpaB then mediates the oxidative cleavage the C19-C20 double bond in FDHMP to yield FDHMP-3C via a mycophenolic aldehyde intermediate. The O-methyltransferase mpaG catalyzes the methylation of FDHMP-3C to yield MFDHMP-3C. After the cytosolic methylation of FDHMP-3C, MFDHMP-3C enters into peroxisomes probably via free diffusion due to its low molecular weight. Upon a peroxisomal CoA ligation reaction, catalyzed by a beta-oxidation component enzyme acyl-CoA ligase ACL891, MFDHMP-3C-CoA would then be restricted to peroxisomes for the following beta-oxidation pathway steps. The peroxisomal beta-oxidation machinery than converts MFDHMP-3C-CoA into MPA_CoA, via a beta-oxidation chain-shortening process. Finally mpaH acts as a peroxisomal acyl-CoA hydrolase with high substrate specificity toward MPA-CoA to release the final product MPA. This is ER-bound oxygenase mpaB from Penicillium brevicompactum.